The chain runs to 360 residues: Variable large protein 14 (360 aa).

Positions 1 to 18 (MRKRISAIIMTLFMVLAS) are cleaved as a signal peptide. Cys-19 carries the N-palmitoyl cysteine lipid modification. Cys-19 carries the S-diacylglycerol cysteine lipid modification.

Belongs to the variable large protein (Vlp) family. Beta subfamily.

The protein localises to the cell outer membrane. Its function is as follows. The Vlp and Vsp proteins are antigenically distinct proteins, only one vlp or vsp gene is transcriptionally active at any one time. Switching between these genes is a mechanism of host immune response evasion. The polypeptide is Variable large protein 14 (Borrelia hermsii).